A 158-amino-acid chain; its full sequence is Transcription elongation factor GreA (158 aa).

The stretch at 46–66 forms a coiled coil; sequence AEYEAAKERQGFIEGRISELE.

Belongs to the GreA/GreB family.

Functionally, necessary for efficient RNA polymerase transcription elongation past template-encoded arresting sites. The arresting sites in DNA have the property of trapping a certain fraction of elongating RNA polymerases that pass through, resulting in locked ternary complexes. Cleavage of the nascent transcript by cleavage factors such as GreA or GreB allows the resumption of elongation from the new 3'terminus. GreA releases sequences of 2 to 3 nucleotides. In Neisseria meningitidis serogroup B (strain ATCC BAA-335 / MC58), this protein is Transcription elongation factor GreA.